A 414-amino-acid chain; its full sequence is Argininosuccinate synthase (414 aa).

ATP is bound at residue alanine 12–serine 20. Residues tyrosine 90 and serine 95 each coordinate L-citrulline. Glycine 120 is a binding site for ATP. Residues threonine 122, asparagine 126, and aspartate 127 each contribute to the L-aspartate site. Residue asparagine 126 coordinates L-citrulline. Residues arginine 130, serine 179, serine 188, glutamate 264, and tyrosine 276 each coordinate L-citrulline.

Belongs to the argininosuccinate synthase family. Type 1 subfamily. As to quaternary structure, homotetramer.

It is found in the cytoplasm. It carries out the reaction L-citrulline + L-aspartate + ATP = 2-(N(omega)-L-arginino)succinate + AMP + diphosphate + H(+). It functions in the pathway amino-acid biosynthesis; L-arginine biosynthesis; L-arginine from L-ornithine and carbamoyl phosphate: step 2/3. The sequence is that of Argininosuccinate synthase from Alkaliphilus metalliredigens (strain QYMF).